The chain runs to 365 residues: tRNA N6-adenosine threonylcarbamoyltransferase (365 aa).

Fe cation contacts are provided by H119 and H123. Substrate is bound by residues L141–G145, D174, G187, and N288. D316 is a binding site for Fe cation.

This sequence belongs to the KAE1 / TsaD family. Fe(2+) serves as cofactor.

The protein localises to the cytoplasm. The enzyme catalyses L-threonylcarbamoyladenylate + adenosine(37) in tRNA = N(6)-L-threonylcarbamoyladenosine(37) in tRNA + AMP + H(+). Required for the formation of a threonylcarbamoyl group on adenosine at position 37 (t(6)A37) in tRNAs that read codons beginning with adenine. Is involved in the transfer of the threonylcarbamoyl moiety of threonylcarbamoyl-AMP (TC-AMP) to the N6 group of A37, together with TsaE and TsaB. TsaD likely plays a direct catalytic role in this reaction. In Rhizobium etli (strain ATCC 51251 / DSM 11541 / JCM 21823 / NBRC 15573 / CFN 42), this protein is tRNA N6-adenosine threonylcarbamoyltransferase.